A 335-amino-acid chain; its full sequence is Probable nicotianamine synthase 3 (335 aa).

The protein belongs to the nicotianamine synthase (NAS)-like family.

The catalysed reaction is 3 S-adenosyl-L-methionine = nicotianamine + 3 S-methyl-5'-thioadenosine + 3 H(+). In terms of biological role, synthesizes nicotianamine, a polyamine that is the first intermediate in the synthesis of the phytosiderophores of the mugineic acid type found in gramineae which serves as a sensor for the physiological iron status within the plant, and/or might be involved in the transport of iron. The chain is Probable nicotianamine synthase 3 (NAS3) from Hordeum vulgare (Barley).